The primary structure comprises 649 residues: 1-deoxy-D-xylulose-5-phosphate synthase 1 (649 aa).

Thiamine diphosphate contacts are provided by residues His79 and 120–122 (AHS). Mg(2+) is bound at residue Asp151. Thiamine diphosphate-binding positions include 152-153 (GS), Asn180, Tyr289, and Glu371. Mg(2+) is bound at residue Asn180.

Belongs to the transketolase family. DXPS subfamily. Homodimer. Mg(2+) serves as cofactor. It depends on thiamine diphosphate as a cofactor.

The enzyme catalyses D-glyceraldehyde 3-phosphate + pyruvate + H(+) = 1-deoxy-D-xylulose 5-phosphate + CO2. The protein operates within metabolic intermediate biosynthesis; 1-deoxy-D-xylulose 5-phosphate biosynthesis; 1-deoxy-D-xylulose 5-phosphate from D-glyceraldehyde 3-phosphate and pyruvate: step 1/1. In terms of biological role, catalyzes the acyloin condensation reaction between C atoms 2 and 3 of pyruvate and glyceraldehyde 3-phosphate to yield 1-deoxy-D-xylulose-5-phosphate (DXP). The sequence is that of 1-deoxy-D-xylulose-5-phosphate synthase 1 from Zymomonas mobilis subsp. mobilis (strain ATCC 31821 / ZM4 / CP4).